Here is a 540-residue protein sequence, read N- to C-terminus: NAD(P)H-quinone oxidoreductase subunit 2 B, chloroplastic (540 aa).

13 helical membrane-spanning segments follow: residues 24–44 (LLLFDGSLIFPECILIFGLIL), 57–77 (IPWLYFIPSTSLVMSITALLF), 99–119 (IFQFLILLCSTLCIPLSVEYI), 124–144 (MAITEFLLFVLTATLGGMFLC), 149–169 (FITIFVAPECFSLCSYLLSGY), 183–203 (YLLMGGASSSILVHGFSWLYG), 227–247 (PGISIALIFITVGIGFKLSPA), 325–345 (WHLLLEILAILSMILGNLIAI), 353–373 (MLAYSSIGQIGYVIIGIIVGD), 384–404 (YMLFYISMNLGTFACIVLFGL), 425–445 (ALSLALCLLSLGGLPPLAGFF), 448–468 (LYLFWCGWQAGLYFLVLIGLL), and 514–534 (MIVCVIASTIPGISMNPIIAI).

This sequence belongs to the complex I subunit 2 family. As to quaternary structure, NDH is composed of at least 16 different subunits, 5 of which are encoded in the nucleus.

Its subcellular location is the plastid. It is found in the chloroplast thylakoid membrane. The catalysed reaction is a plastoquinone + NADH + (n+1) H(+)(in) = a plastoquinol + NAD(+) + n H(+)(out). It catalyses the reaction a plastoquinone + NADPH + (n+1) H(+)(in) = a plastoquinol + NADP(+) + n H(+)(out). NDH shuttles electrons from NAD(P)H:plastoquinone, via FMN and iron-sulfur (Fe-S) centers, to quinones in the photosynthetic chain and possibly in a chloroplast respiratory chain. The immediate electron acceptor for the enzyme in this species is believed to be plastoquinone. Couples the redox reaction to proton translocation, and thus conserves the redox energy in a proton gradient. In Coffea arabica (Arabian coffee), this protein is NAD(P)H-quinone oxidoreductase subunit 2 B, chloroplastic.